A 712-amino-acid polypeptide reads, in one-letter code: Eukaryotic translation initiation factor 3 subunit B (712 aa).

An N-acetylmethionine modification is found at methionine 1. In terms of domain architecture, RRM spans 56 to 143; the sequence is NIIVVDHLPV…HIFAVNMFDD (88 aa).

This sequence belongs to the eIF-3 subunit B family. Component of the eukaryotic translation initiation factor 3 (eIF-3) complex, which is composed of at least 13 different subunits. Binds to the translation initiation factor TIF3H1.

It localises to the cytoplasm. Its function is as follows. RNA-binding component of the eukaryotic translation initiation factor 3 (eIF-3) complex, which is involved in protein synthesis of a specialized repertoire of mRNAs and, together with other initiation factors, stimulates binding of mRNA and methionyl-tRNAi to the 40S ribosome. The eIF-3 complex specifically targets and initiates translation of a subset of mRNAs involved in cell proliferation. In Arabidopsis thaliana (Mouse-ear cress), this protein is Eukaryotic translation initiation factor 3 subunit B (TIF3B1).